The sequence spans 726 residues: Catalase-peroxidase (726 aa).

The segment at 1 to 33 (MSTTDDTHNTLSTGKCPFHQGGHDRSAGAGTAS) is disordered. The segment at residues 105-226 (WHGAGTYRSI…LGATEMGLIY (122 aa)) is a cross-link (tryptophyl-tyrosyl-methioninium (Trp-Tyr) (with M-252)). The active-site Proton acceptor is histidine 106. The tryptophyl-tyrosyl-methioninium (Tyr-Met) (with W-105) cross-link spans 226–252 (YVNPEGPDHSGEPLSAAAAIRATFGNM). Histidine 267 contributes to the heme b binding site.

It belongs to the peroxidase family. Peroxidase/catalase subfamily. Homodimer or homotetramer. It depends on heme b as a cofactor. Post-translationally, formation of the three residue Trp-Tyr-Met cross-link is important for the catalase, but not the peroxidase activity of the enzyme.

It carries out the reaction H2O2 + AH2 = A + 2 H2O. The enzyme catalyses 2 H2O2 = O2 + 2 H2O. Its function is as follows. Bifunctional enzyme with both catalase and broad-spectrum peroxidase activity. The chain is Catalase-peroxidase from Salmonella heidelberg (strain SL476).